The sequence spans 248 residues: uncharacterized protein (248 aa).

The helical transmembrane segment at 104–122 (CDVAACVGATWIAGGFAGA) threads the bilayer.

It localises to the membrane. This is an uncharacterized protein from Escherichia coli (strain K12).